A 117-amino-acid chain; its full sequence is Large ribosomal subunit protein bL19 (117 aa).

The protein belongs to the bacterial ribosomal protein bL19 family.

This protein is located at the 30S-50S ribosomal subunit interface and may play a role in the structure and function of the aminoacyl-tRNA binding site. The protein is Large ribosomal subunit protein bL19 of Proteus mirabilis (strain HI4320).